The chain runs to 433 residues: 3-phosphoshikimate 1-carboxyvinyltransferase (433 aa).

Residues Lys22, Ser23, and Arg27 each coordinate 3-phosphoshikimate. Position 22 (Lys22) interacts with phosphoenolpyruvate. 2 residues coordinate phosphoenolpyruvate: Gly96 and Arg130. The 3-phosphoshikimate site is built by Ser176, Ser177, Gln178, Ser204, Asp319, Asn342, and Lys346. Phosphoenolpyruvate is bound at residue Gln178. The Proton acceptor role is filled by Asp319. Arg350, Arg394, and Lys419 together coordinate phosphoenolpyruvate.

Belongs to the EPSP synthase family. In terms of assembly, monomer.

The protein localises to the cytoplasm. It catalyses the reaction 3-phosphoshikimate + phosphoenolpyruvate = 5-O-(1-carboxyvinyl)-3-phosphoshikimate + phosphate. It participates in metabolic intermediate biosynthesis; chorismate biosynthesis; chorismate from D-erythrose 4-phosphate and phosphoenolpyruvate: step 6/7. Its function is as follows. Catalyzes the transfer of the enolpyruvyl moiety of phosphoenolpyruvate (PEP) to the 5-hydroxyl of shikimate-3-phosphate (S3P) to produce enolpyruvyl shikimate-3-phosphate and inorganic phosphate. This is 3-phosphoshikimate 1-carboxyvinyltransferase from Actinobacillus succinogenes (strain ATCC 55618 / DSM 22257 / CCUG 43843 / 130Z).